A 1090-amino-acid chain; its full sequence is Protein transport protein Sec24A (1090 aa).

2 disordered regions span residues 1–260 and 272–325; these read MAQP…AHNT and TPQL…TQTP. Over residues 8 to 28 the composition is skewed to low complexity; sequence AARGAAASLQAQNGAASASGS. Composition is skewed to polar residues over residues 29–55, 138–151, and 162–184; these read PYTN…SQPP, WQYN…QTNH, and GNPN…QTSF. Pro residues predominate over residues 194-236; that stretch reads QNPPLPPTFQPGAPPGPPPAGGPPPSRGPAPQKTPPRAAPPPS. Polar residues-rich tracts occupy residues 237–258, 274–286, and 313–325; these read FNSA…TAAH, QLVN…SRSV, and SYPS…TQTP. The Zn(2+) site is built by Cys-428, Cys-431, Cys-449, and Cys-452. The interval 428 to 452 is zinc finger-like; that stretch reads CRSCRTYINPFVNFLDQRRWKCNLC. The Gelsolin-like repeat unit spans residues 963–1036; the sequence is PQPPILQLSV…PESARIAAFI (74 aa).

Belongs to the SEC23/SEC24 family. SEC24 subfamily. As to quaternary structure, COPII is composed of at least five proteins: the Sec23/24 complex, the Sec13/31 complex and Sar1. Interacts with TMED2. Interacts (as part of the Sec23/24 complex) with SEC22B; recruits SEC22B into COPII-coated vesicles for its transport from the endoplasmic reticulum to the Golgi. Interacts with STING1; promoting STING1 translocation to COPII vesicles in a STEEP1-dependent manner. Interacts with TMEM39A. Interacts with SACM1L; this interaction is reduced in the absence of TMEM39A. Interacts with kinase FAM20C; transport of FAM20C from the endoplasmic reticulum to the Golgi is likely to be mediated by COPII vesicles.

It localises to the cytoplasmic vesicle. Its subcellular location is the COPII-coated vesicle membrane. The protein localises to the endoplasmic reticulum membrane. The protein resides in the cytoplasm. It is found in the cytosol. In terms of biological role, component of the coat protein complex II (COPII) which promotes the formation of transport vesicles from the endoplasmic reticulum (ER). The coat has two main functions, the physical deformation of the endoplasmic reticulum membrane into vesicles and the selection of cargo molecules for their transport to the Golgi complex. Plays a central role in cargo selection within the COPII complex and together with SEC24B may have a different specificity compared to SEC24C and SEC24D. May package preferentially cargos with cytoplasmic DxE or LxxLE motifs and may also recognize conformational epitopes. The sequence is that of Protein transport protein Sec24A from Mus musculus (Mouse).